Here is a 103-residue protein sequence, read N- to C-terminus: Histone H4 (103 aa).

At lysine 6 the chain carries N6-acetyl-N6-methyllysine; alternate. An N6-methyllysine; alternate mark is found at lysine 6, lysine 9, and lysine 13. Lysine 13 bears the N6-acetyl-N6-methyllysine; alternate mark. The DNA-binding element occupies 17 to 21 (KRHRK). Residue lysine 92 is modified to N6-glutaryllysine.

It belongs to the histone H4 family. In terms of assembly, the nucleosome is a histone octamer containing two molecules each of H2A, H2B, H3 and H4 assembled in one H3-H4 heterotetramer and two H2A-H2B heterodimers. The octamer wraps approximately 147 bp of DNA. Post-translationally, glutarylation at Lys-92 (H4K91glu) destabilizes nucleosomes by promoting dissociation of the H2A-H2B dimers from nucleosomes.

The protein localises to the nucleus. Its subcellular location is the chromosome. In terms of biological role, core component of nucleosome. Nucleosomes wrap and compact DNA into chromatin, limiting DNA accessibility to the cellular machineries which require DNA as a template. Histones thereby play a central role in transcription regulation, DNA repair, DNA replication and chromosomal stability. DNA accessibility is regulated via a complex set of post-translational modifications of histones, also called histone code, and nucleosome remodeling. In Mortierella alpina (Oleaginous fungus), this protein is Histone H4 (H4.1).